The sequence spans 340 residues: Cytochrome P450 monooxygenase cheG (340 aa).

N-linked (GlcNAc...) asparagine glycosylation is present at N25. Residues 37 to 57 (MLLGIPTVILSLTPAVLRLLI) form a helical membrane-spanning segment. C283 provides a ligand contact to heme. Residues 308-340 (LPPGQGKPEKGSMPNGSMSPDTKAKVLFRSRKL) are disordered. N322 is a glycosylation site (N-linked (GlcNAc...) asparagine).

Belongs to the cytochrome P450 family. Requires heme as cofactor.

The protein localises to the membrane. It functions in the pathway secondary metabolite biosynthesis. Functionally, cytochrome P450 monooxygenase; part of the gene cluster that mediates the biosynthesis of chaetoglobosin A which has a unique inhibitory activity against actin polymerization in mammalian cells. Chaetoglobosin A and its intermediates are involved in the morphological differentiation of C.globosum. The first step of the pathway is the synthesis of prochaetoglobosin I via condensation of one acetyl-CoA, 8 malonyl-CoA, and a L-tryptophan molecule by the PKS-NRPS hybrid synthetase cheA, followed by reduction of backbone double bond to install desired geometry by the enoyl reductase cheB. Further multiple oxidation steps performed by the cytochrome P450 monooxygenases cheE and cheG, as well as by the FAD-linked oxidoreductase cheF, lead to the formation of chaetoglobosin A. Depending on the order of action of these reductases, distinct intermediates can be identified. Within the pathway, the cytochrome P450 monooxygenase cheE catalyzes a stereospecific epoxidation on prochaetoglobosin I, cytoglobosin D, and chaetoglobosin J intermediates. The FAD-linked oxidoreductase cheF performs dehydrogenation of the C-20 hydroxyl groups in the 20-dihyrochaetoglobosin A and cytoglobosin D intermediates. Finally, the cytochrome P450 monooxygenase cheG can catalyze the stereospecific dihydroxylation of prochaetoglobosin I and prochaetoglobosin IV at C-19 and C-20, respectively. The Diels-Alderase cheD may play a role in the post-PKS-NRPS biosynthetic steps catalyzing Diels-Alder cyclization. In Chaetomium globosum (strain ATCC 6205 / CBS 148.51 / DSM 1962 / NBRC 6347 / NRRL 1970) (Soil fungus), this protein is Cytochrome P450 monooxygenase cheG.